The primary structure comprises 465 residues: Putative F-box protein At1g21990 (465 aa).

An F-box domain is found at 8-54 (RDLISGSPDEILGKILSFLPTHHAATTSVLSKRWRNLLPLVDKLELT).

In Arabidopsis thaliana (Mouse-ear cress), this protein is Putative F-box protein At1g21990.